The following is a 604-amino-acid chain: Asparagine synthetase [glutamine-hydrolyzing] 1 (604 aa).

The active-site Nucleophile is the C2. The Glutamine amidotransferase type-2 domain occupies 2-186 (CGILAVLGAA…PGHLYSSAAG (185 aa)). Residues 50–54 (RLAIV), 75–77 (NGE), and D99 contribute to the L-glutamine site. The region spanning 211–451 (LREAFEKAVI…LPKHILYRQK (241 aa)) is the Asparagine synthetase domain. ATP contacts are provided by residues L232, V268, and 342–343 (SG).

It carries out the reaction L-aspartate + L-glutamine + ATP + H2O = L-asparagine + L-glutamate + AMP + diphosphate + H(+). Its pathway is amino-acid biosynthesis; L-asparagine biosynthesis. In terms of biological role, essential for nitrogen assimilation, distribution and remobilization within the plant via the phloem. The chain is Asparagine synthetase [glutamine-hydrolyzing] 1 from Oryza sativa subsp. japonica (Rice).